Reading from the N-terminus, the 166-residue chain is Large ribosomal subunit protein uL10 (166 aa).

The protein belongs to the universal ribosomal protein uL10 family. As to quaternary structure, part of the ribosomal stalk of the 50S ribosomal subunit. The N-terminus interacts with L11 and the large rRNA to form the base of the stalk. The C-terminus forms an elongated spine to which L12 dimers bind in a sequential fashion forming a multimeric L10(L12)X complex.

Its function is as follows. Forms part of the ribosomal stalk, playing a central role in the interaction of the ribosome with GTP-bound translation factors. This chain is Large ribosomal subunit protein uL10, found in Bacillus cereus (strain G9842).